The following is a 318-amino-acid chain: MSVDQTLYSRTPAAMADPTCAGPAAFTAAGAFSQPDLMAFSLREEEPIWGFDTIAPSMASWQGKMEQQTFCNPNMERGLKNTHVRNGQPTPPPFDDKKLQTPMGEMYPVAQYAFNSSPPEYAPPKHRSSLSEQSQTDGYGVSTRRRKASAIDQCEQQQEREKREKFLERNRLAASKCRQKKKEHTKLLETRFREVSNKKGELESEIEHLRSEVLNLKNEMLRHAQCGDEAIKIHLAQMVRLITSKDTPNRDLVSPMRSPEQMAASTPHGLSFGFDGPMQLPSEMGSPLDQRRDSEQSIMTESSYTFSTDDSFEELINV.

The disordered stretch occupies residues 114–157 (FNSSPPEYAPPKHRSSLSEQSQTDGYGVSTRRRKASAIDQCEQQ). The basic motif stretch occupies residues 160 to 199 (REKREKFLERNRLAASKCRQKKKEHTKLLETRFREVSNKK). The 64-residue stretch at 160-223 (REKREKFLER…LNLKNEMLRH (64 aa)) folds into the bZIP domain. Residues 202-216 (LESEIEHLRSEVLNL) form a leucine-zipper region. The disordered stretch occupies residues 275 to 301 (DGPMQLPSEMGSPLDQRRDSEQSIMTE).

Belongs to the bZIP family. ATF subfamily.

It localises to the nucleus. Transcription factor that acts as a key player in the regulatory circuit that integrates secondary metabolism and cellular response to oxidative stress. Regulates the genes involved in development and stress response through direct binding to their promoters. The sequence is that of Basic leucine zipper (bZIP) transcription factor atfB from Aspergillus flavus (strain ATCC 200026 / FGSC A1120 / IAM 13836 / NRRL 3357 / JCM 12722 / SRRC 167).